Here is a 526-residue protein sequence, read N- to C-terminus: Protein DETOXIFICATION 43 (526 aa).

Topologically, residues 1–36 are cytoplasmic; that stretch reads MTETGDDLATVKKPIPFLVIFKDLRHVFSRDTTGRE. A helical transmembrane segment spans residues 37 to 57; that stretch reads ILGIAFPAALALAADPIASLI. Over 58 to 59 the chain is Extracellular; that stretch reads DT. Residues 60–80 traverse the membrane as a helical segment; the sequence is AFVGRLGAVQLAAVGVSIAIF. The Cytoplasmic portion of the chain corresponds to 81-170; it reads NQASRITIFP…NKKEKRTIRT (90 aa). The disordered stretch occupies residues 133–166; it reads ISSPTSNDTNQPQQPPAPDTKSNSGNKSNKKEKR. The span at 134 to 144 shows a compositional bias: polar residues; sequence SSPTSNDTNQP. A helical transmembrane segment spans residues 171–191; it reads ASTAMILGLILGLVQAIFLIF. The Extracellular portion of the chain corresponds to 192–215; sequence SSKLLLGVMGVKPNSPMLSPAHKY. The helical transmembrane segment at 216–236 threads the bilayer; sequence LSIRALGAPALLLSLAMQGIF. Over 237-244 the chain is Cytoplasmic; it reads RGFKDTKT. Residues 245-267 traverse the membrane as a helical segment; that stretch reads PLFATVVADVINIVLDPIFIFVL. Over 268–270 the chain is Extracellular; it reads RLG. Residues 271–293 traverse the membrane as a helical segment; the sequence is IIGAAIAHVISQYFMTLILFVFL. At 294 to 316 the chain is on the cytoplasmic side; the sequence is AKKVNLIPPNFGDLQFGRFLKNG. Residues 317 to 337 traverse the membrane as a helical segment; it reads LLLLARTIAVTFCQTLAAAMA. Over 338 to 353 the chain is Extracellular; it reads ARLGTTPMAAFQICLQ. The helical transmembrane segment at 354–374 threads the bilayer; that stretch reads VWLTSSLLNDGLAVAGQAILA. The Cytoplasmic portion of the chain corresponds to 375 to 396; that stretch reads CSFAEKDYNKVTAVASRVLQMG. Residues 397 to 417 traverse the membrane as a helical segment; the sequence is FVLGLGLSVFVGLGLYFGAGV. Residues 418–426 are Extracellular-facing; that stretch reads FSKDPAVIH. The chain crosses the membrane as a helical span at residues 427 to 447; it reads LMAIGIPFIAATQPINSLAFV. Topologically, residues 448-457 are cytoplasmic; the sequence is LDGVNFGASD. Residues 458-478 traverse the membrane as a helical segment; the sequence is FAYTAYSMVGVAAISIAAVIY. At 479 to 484 the chain is on the extracellular side; sequence MAKTNG. The chain crosses the membrane as a helical span at residues 485-505; sequence FIGIWIALTIYMALRAITGIA. Residues 506-526 lie on the Cytoplasmic side of the membrane; that stretch reads RMATGTGPWRFLRGRSSSSSS.

This sequence belongs to the multi antimicrobial extrusion (MATE) (TC 2.A.66.1) family. Expressed in roots in the pericycle and cells internal to the pericycle and surrounding the vascular tissue. Also expressed in seed and flower.

The protein resides in the cell membrane. Its function is as follows. Citrate transporter responsible for loading citrate into xylem tissues, which helps facilitate iron transport to shoots. Mediates the citrate release in the apoplastic spaces during plant development allowing iron nutrition between symplastically disconnected tissues. This is Protein DETOXIFICATION 43 from Arabidopsis thaliana (Mouse-ear cress).